A 272-amino-acid chain; its full sequence is MDSSSISRWFEYESGHAWCESAYKYQTLPYVAEFANTCTNLPIIVLPLVNIMLLRRYLHDVNGGLVFPQLLLTFNGLASTYYHATLNLFGQLVDELSLVWIITVFLVVYIPVMKWFPERFSKRLTVVRWVVLIVTAVVSALCFLEPNLNAIALMLFSIPAAVVIRYEGKQSGIPDIENFPSRILALWGVAFSFWFADRLLCDFWLYLGTPYLHALFHLLAGLAGYTIFIMFSMIDIESRSKTHRYTAAVRYFPDKNGSIFSFPYISLKERSQ.

2 helical membrane-spanning segments follow: residues 34–54 (FANT…IMLL) and 61–81 (VNGG…ASTY). Residue histidine 83 participates in Zn(2+) binding. The next 4 membrane-spanning stretches (helical) occupy residues 96 to 116 (LSLV…MKWF), 124 to 144 (LTVV…LCFL), 148 to 168 (LNAI…RYEG), and 183 to 203 (ILAL…LCDF). Histidine 213 and histidine 217 together coordinate Zn(2+). A helical membrane pass occupies residues 214 to 234 (ALFHLLAGLAGYTIFIMFSMI). The N-linked (GlcNAc...) asparagine glycan is linked to asparagine 256.

Belongs to the alkaline ceramidase family. Zn(2+) serves as cofactor.

The protein localises to the membrane. The catalysed reaction is an N-acylsphing-4-enine + H2O = sphing-4-enine + a fatty acid. In terms of biological role, hydrolyzes the sphingolipid ceramide into sphingosine and free fatty acid. In Caenorhabditis briggsae, this protein is Alkaline ceramidase.